The sequence spans 226 residues: Transmembrane protein 98 (226 aa).

Residues 1 to 3 (MET) are Cytoplasmic-facing. A helical membrane pass occupies residues 4 to 24 (VVIVAIGVLATIFLASFAALV). Residues 25–226 (VVCRQRYCRT…DNFLQEQSAI (202 aa)) lie on the Extracellular side of the membrane.

Belongs to the TMEM98 family.

It is found in the endoplasmic reticulum membrane. The protein localises to the cell membrane. The protein resides in the secreted. It localises to the extracellular exosome. This is Transmembrane protein 98 (tmem98) from Xenopus laevis (African clawed frog).